Consider the following 155-residue polypeptide: Large ribosomal subunit protein bL17 (155 aa).

Belongs to the bacterial ribosomal protein bL17 family. Part of the 50S ribosomal subunit. Contacts protein L32.

In Bifidobacterium adolescentis (strain ATCC 15703 / DSM 20083 / NCTC 11814 / E194a), this protein is Large ribosomal subunit protein bL17.